The primary structure comprises 100 residues: Urease subunit gamma (100 aa).

This sequence belongs to the urease gamma subunit family. In terms of assembly, heterotrimer of UreA (gamma), UreB (beta) and UreC (alpha) subunits. Three heterotrimers associate to form the active enzyme.

The protein localises to the cytoplasm. It carries out the reaction urea + 2 H2O + H(+) = hydrogencarbonate + 2 NH4(+). The protein operates within nitrogen metabolism; urea degradation; CO(2) and NH(3) from urea (urease route): step 1/1. The chain is Urease subunit gamma from Pseudomonas fluorescens (strain ATCC BAA-477 / NRRL B-23932 / Pf-5).